A 134-amino-acid chain; its full sequence is MSSNAKWLNKVKWDEHGLVPVIAQEVGTNDVLMFAWMNRDALAKTIETGEAIYWSRSRKKLWHKGEESGHTQKVHEVRLDCDEDVVLLKVEQVGKIACHTGRHSCFFQKFEGGAKDGDWETVEPVLKNPETIYK.

Aspartate 80 contacts Mg(2+). Residue cysteine 81 coordinates Zn(2+). Residues aspartate 82 and aspartate 84 each coordinate Mg(2+). Cysteine 98 and cysteine 105 together coordinate Zn(2+).

This sequence belongs to the PRA-CH family. As to quaternary structure, homodimer. It depends on Mg(2+) as a cofactor. Requires Zn(2+) as cofactor.

Its subcellular location is the cytoplasm. The enzyme catalyses 1-(5-phospho-beta-D-ribosyl)-5'-AMP + H2O = 1-(5-phospho-beta-D-ribosyl)-5-[(5-phospho-beta-D-ribosylamino)methylideneamino]imidazole-4-carboxamide. It functions in the pathway amino-acid biosynthesis; L-histidine biosynthesis; L-histidine from 5-phospho-alpha-D-ribose 1-diphosphate: step 3/9. In terms of biological role, catalyzes the hydrolysis of the adenine ring of phosphoribosyl-AMP. The chain is Phosphoribosyl-AMP cyclohydrolase from Janthinobacterium sp. (strain Marseille) (Minibacterium massiliensis).